A 290-amino-acid chain; its full sequence is Shikimate dehydrogenase (NADP(+)) (290 aa).

Residues 22–24 (SLS) and T68 each bind shikimate. K72 functions as the Proton acceptor in the catalytic mechanism. Residue D84 participates in NADP(+) binding. Shikimate-binding residues include N93 and D108. Residues 133–137 (GSGGS) and I228 contribute to the NADP(+) site. Y230 contributes to the shikimate binding site. Residue G251 coordinates NADP(+).

This sequence belongs to the shikimate dehydrogenase family. Homodimer.

The enzyme catalyses shikimate + NADP(+) = 3-dehydroshikimate + NADPH + H(+). It participates in metabolic intermediate biosynthesis; chorismate biosynthesis; chorismate from D-erythrose 4-phosphate and phosphoenolpyruvate: step 4/7. In terms of biological role, involved in the biosynthesis of the chorismate, which leads to the biosynthesis of aromatic amino acids. Catalyzes the reversible NADPH linked reduction of 3-dehydroshikimate (DHSA) to yield shikimate (SA). The chain is Shikimate dehydrogenase (NADP(+)) from Leptospira interrogans serogroup Icterohaemorrhagiae serovar Lai (strain 56601).